The chain runs to 252 residues: Uridylate kinase (252 aa).

24–27 (KLSG) lines the ATP pocket. The involved in allosteric activation by GTP stretch occupies residues 32–37 (GEEGFG). Position 66 (glycine 66) interacts with UMP. Residues glycine 67 and arginine 71 each contribute to the ATP site. Residues aspartate 86 and 147-154 (TGNPFFTT) contribute to the UMP site. Residues threonine 174, tyrosine 180, and aspartate 183 each coordinate ATP.

Belongs to the UMP kinase family. Homohexamer.

It localises to the cytoplasm. It carries out the reaction UMP + ATP = UDP + ADP. It participates in pyrimidine metabolism; CTP biosynthesis via de novo pathway; UDP from UMP (UMPK route): step 1/1. Allosterically activated by GTP. Inhibited by UTP. In terms of biological role, catalyzes the reversible phosphorylation of UMP to UDP. This chain is Uridylate kinase, found in Alcanivorax borkumensis (strain ATCC 700651 / DSM 11573 / NCIMB 13689 / SK2).